The primary structure comprises 123 residues: Small ribosomal subunit protein uS12cz/uS12cy (123 aa).

It belongs to the universal ribosomal protein uS12 family. In terms of assembly, part of the 30S ribosomal subunit.

Its subcellular location is the plastid. It localises to the chloroplast. Its function is as follows. With S4 and S5 plays an important role in translational accuracy. Located at the interface of the 30S and 50S subunits. The sequence is that of Small ribosomal subunit protein uS12cz/uS12cy (rps12-A) from Daucus carota (Wild carrot).